The primary structure comprises 488 residues: Glutamyl-tRNA(Gln) amidotransferase subunit A (488 aa).

Catalysis depends on charge relay system residues Lys77 and Ser152. The Acyl-ester intermediate role is filled by Ser176.

The protein belongs to the amidase family. GatA subfamily. Heterotrimer of A, B and C subunits.

The catalysed reaction is L-glutamyl-tRNA(Gln) + L-glutamine + ATP + H2O = L-glutaminyl-tRNA(Gln) + L-glutamate + ADP + phosphate + H(+). Its function is as follows. Allows the formation of correctly charged Gln-tRNA(Gln) through the transamidation of misacylated Glu-tRNA(Gln) in organisms which lack glutaminyl-tRNA synthetase. The reaction takes place in the presence of glutamine and ATP through an activated gamma-phospho-Glu-tRNA(Gln). In Streptococcus gordonii (strain Challis / ATCC 35105 / BCRC 15272 / CH1 / DL1 / V288), this protein is Glutamyl-tRNA(Gln) amidotransferase subunit A.